A 331-amino-acid polypeptide reads, in one-letter code: GTP 3',8-cyclase (331 aa).

The region spanning 6–231 (PFGRTISYLR…TDIPFKTGGP (226 aa)) is the Radical SAM core domain. GTP is bound at residue Arg15. [4Fe-4S] cluster is bound by residues Cys22 and Cys26. S-adenosyl-L-methionine is bound at residue Tyr28. Residue Cys29 coordinates [4Fe-4S] cluster. Arg64 lines the GTP pocket. Gly68 serves as a coordination point for S-adenosyl-L-methionine. Residue Thr98 participates in GTP binding. Ser122 serves as a coordination point for S-adenosyl-L-methionine. Residue Lys158 participates in GTP binding. S-adenosyl-L-methionine is bound at residue Met192. [4Fe-4S] cluster-binding residues include Cys255 and Cys258. 260–262 (RVR) contacts GTP. Residue Cys272 coordinates [4Fe-4S] cluster.

It belongs to the radical SAM superfamily. MoaA family. As to quaternary structure, monomer and homodimer. [4Fe-4S] cluster serves as cofactor.

The enzyme catalyses GTP + AH2 + S-adenosyl-L-methionine = (8S)-3',8-cyclo-7,8-dihydroguanosine 5'-triphosphate + 5'-deoxyadenosine + L-methionine + A + H(+). It participates in cofactor biosynthesis; molybdopterin biosynthesis. Catalyzes the cyclization of GTP to (8S)-3',8-cyclo-7,8-dihydroguanosine 5'-triphosphate. The protein is GTP 3',8-cyclase of Mesorhizobium japonicum (strain LMG 29417 / CECT 9101 / MAFF 303099) (Mesorhizobium loti (strain MAFF 303099)).